The sequence spans 208 residues: Methyl-CpG-binding domain protein 3-like 5 (208 aa).

This sequence belongs to the MBD3L family.

This is Methyl-CpG-binding domain protein 3-like 5 (MBD3L5) from Homo sapiens (Human).